Reading from the N-terminus, the 185-residue chain is Threonylcarbamoyl-AMP synthase (185 aa).

In terms of domain architecture, YrdC-like spans 4–185; the sequence is SWRVQQAARE…LATGEVVRPG (182 aa).

Belongs to the SUA5 family. TsaC subfamily.

It is found in the cytoplasm. The catalysed reaction is L-threonine + hydrogencarbonate + ATP = L-threonylcarbamoyladenylate + diphosphate + H2O. In terms of biological role, required for the formation of a threonylcarbamoyl group on adenosine at position 37 (t(6)A37) in tRNAs that read codons beginning with adenine. Catalyzes the conversion of L-threonine, HCO(3)(-)/CO(2) and ATP to give threonylcarbamoyl-AMP (TC-AMP) as the acyladenylate intermediate, with the release of diphosphate. This chain is Threonylcarbamoyl-AMP synthase, found in Pseudomonas entomophila (strain L48).